A 390-amino-acid chain; its full sequence is Glutamyl-tRNA reductase (390 aa).

Residues 46 to 49, S96, 101 to 103, and Q107 each bind substrate; these read TCNR and EAQ. C47 acts as the Nucleophile in catalysis. 176–181 provides a ligand contact to NADP(+); the sequence is GAGEMA.

This sequence belongs to the glutamyl-tRNA reductase family. In terms of assembly, homodimer.

It catalyses the reaction (S)-4-amino-5-oxopentanoate + tRNA(Glu) + NADP(+) = L-glutamyl-tRNA(Glu) + NADPH + H(+). Its pathway is porphyrin-containing compound metabolism; protoporphyrin-IX biosynthesis; 5-aminolevulinate from L-glutamyl-tRNA(Glu): step 1/2. Its function is as follows. Catalyzes the NADPH-dependent reduction of glutamyl-tRNA(Glu) to glutamate 1-semialdehyde (GSA). The polypeptide is Glutamyl-tRNA reductase (Thermus thermophilus (strain ATCC 27634 / DSM 579 / HB8)).